The primary structure comprises 349 residues: ATPase GET3 (349 aa).

Residue 26–33 coordinates ATP; that stretch reads KGGVGKTT. Asp57 is a catalytic residue. ATP-binding residues include Glu240 and Asn267. Cys280 and Cys283 together coordinate Zn(2+).

It belongs to the arsA ATPase family. As to quaternary structure, homodimer. Component of the Golgi to ER traffic (GET) complex, which is composed of GET1, GET2 and GET3. Within the complex, GET1 and GET2 form a heterotetramer which is stabilized by phosphatidylinositol binding and which binds to the GET3 homodimer. Interacts with the chloride channel protein GEF1.

The protein resides in the cytoplasm. The protein localises to the endoplasmic reticulum. Its subcellular location is the golgi apparatus. In terms of biological role, ATPase required for the post-translational delivery of tail-anchored (TA) proteins to the endoplasmic reticulum. Recognizes and selectively binds the transmembrane domain of TA proteins in the cytosol. This complex then targets to the endoplasmic reticulum by membrane-bound receptors GET1 and GET2, where the tail-anchored protein is released for insertion. This process is regulated by ATP binding and hydrolysis. ATP binding drives the homodimer towards the closed dimer state, facilitating recognition of newly synthesized TA membrane proteins. ATP hydrolysis is required for insertion. Subsequently, the homodimer reverts towards the open dimer state, lowering its affinity for the GET1-GET2 receptor, and returning it to the cytosol to initiate a new round of targeting. Cooperates with the HDEL receptor ERD2 to mediate the ATP-dependent retrieval of resident ER proteins that contain a C-terminal H-D-E-L retention signal from the Golgi to the ER. Involved in low-level resistance to the oxyanions arsenite and arsenate, and in heat tolerance. This chain is ATPase GET3, found in Lachancea thermotolerans (strain ATCC 56472 / CBS 6340 / NRRL Y-8284) (Yeast).